We begin with the raw amino-acid sequence, 441 residues long: Interferon-related developmental regulator 2 (441 aa).

Positions 1–15 (MPRARKGNALRKGGQ) are enriched in basic residues. The interval 1-51 (MPRARKGNALRKGGQRRGGGARSSTQADSGSSEDEAASEARSTTSDCPSLL) is disordered.

This sequence belongs to the IFRD family. As to quaternary structure, associates with ribosomes; promoting ribosome inactivation.

Ribosome-binding protein that acts as an inhibitor of mRNA translation by promoting ribosome inactivation. Associates with the P- and E-sites of the ribosome and inserts a C-terminal helix into the mRNA exit channel to preclude translation. This Mus musculus (Mouse) protein is Interferon-related developmental regulator 2.